Reading from the N-terminus, the 699-residue chain is MPTAIKKTFTYGAHTVTLETGEVARQAGGAVIVNVDDTVVLATVVAAKDAKPGQDFFPLTVDYVEKFYAAGRIPGGFFKREGRPTEKETLTSRLIDRPIRPLFPEGFYNEVQVIVTVLSLNPEVDADIPAMIAASAALSISGIPFDGPIGAARVGYADGQYLLNPTVEQLKTSKLNLVVAGTASAVLMVESEADELSEQVMLGAVVFGHEQMQAAINAINELVEVAGKPEWNWQPPAANDALVARVKELALADVEEAFRITSKQARTERLSEIRKRTIAALTDGVDNAPSENEIKDIFFTLEAGTVRSRILNGEPRIDGRDTRTVRPIDIRVGVLPRTHGSALFTRGETQALVVATLGTGRDEQIIDAIAGEYKERFMLHYNFPPFSTGETGRFGVTKRREIGHGRLAKRALVAMLPKGEDFSYTIRVVSEITESNGSSSMASVCGGSLALMDAGVPMKDHVAGIAMGLIKDGNRFAVLTDILGDEDHLGDMDFKVAGTENGVTALQMDIKIQGITKEIMQVALAQAGEGRLHILKQMKDALGVARGEVSEFAPRMLNMKINPEKIRDVIGKGGAVIRALQEETGTVIEIEDDGSITISSVSAEGAQKAKARIEDITAEVEVGKVYEGTVVRLLDFGAIVNILPGRDGLLHVSQIANERVNNVGDYVKEGQAVRVKVLETDERGKIRLSMKALLNENAG.

Mg(2+) is bound by residues Asp487 and Asp493. A KH domain is found at 554-613 (PRMLNMKINPEKIRDVIGKGGAVIRALQEETGTVIEIEDDGSITISSVSAEGAQKAKARI). An S1 motif domain is found at 623 to 691 (GKVYEGTVVR…ERGKIRLSMK (69 aa)).

The protein belongs to the polyribonucleotide nucleotidyltransferase family. Mg(2+) is required as a cofactor.

It is found in the cytoplasm. It catalyses the reaction RNA(n+1) + phosphate = RNA(n) + a ribonucleoside 5'-diphosphate. Its function is as follows. Involved in mRNA degradation. Catalyzes the phosphorolysis of single-stranded polyribonucleotides processively in the 3'- to 5'-direction. In Azoarcus sp. (strain BH72), this protein is Polyribonucleotide nucleotidyltransferase.